An 80-amino-acid polypeptide reads, in one-letter code: Cell division protein ZapB (80 aa).

Residues 3 to 80 (LEILEQLEAK…GLLGKMDEVE (78 aa)) are a coiled coil. The segment at 41-60 (LEQANNGRSEVEQEAQRARD) is disordered. Over residues 49-60 (SEVEQEAQRARD) the composition is skewed to basic and acidic residues.

It belongs to the ZapB family. In terms of assembly, homodimer. The ends of the coiled-coil dimer bind to each other, forming polymers. Interacts with FtsZ.

It is found in the cytoplasm. Non-essential, abundant cell division factor that is required for proper Z-ring formation. It is recruited early to the divisome by direct interaction with FtsZ, stimulating Z-ring assembly and thereby promoting cell division earlier in the cell cycle. Its recruitment to the Z-ring requires functional FtsA or ZipA. The chain is Cell division protein ZapB from Aliivibrio fischeri (strain ATCC 700601 / ES114) (Vibrio fischeri).